Here is a 732-residue protein sequence, read N- to C-terminus: Trehalose phosphorylase (732 aa).

The propeptide occupies 1 to 25; the sequence is MAPPHQFQSKPSDVIRRRLSSAVSS.

The protein belongs to the glycosyltransferase group 1 family. Glycosyltransferase 4 subfamily. In terms of assembly, homodimer.

The enzyme catalyses alpha,alpha-trehalose + phosphate = alpha-D-glucose + alpha-D-glucose 1-phosphate. Activity abolished by 1 mM Cu(2+). 0.1 mM Cu(2+) reduces trehalose phosphorolysis to 76% and trehalose synthesis to 48% of maximum activity. 1 mM Zn(2+) abolishes trehalose synthesis, and reduces trehalose phosphorolysis to 40% of maximum activity. Unaffected by EDTA. In terms of biological role, reversibly catalyzes the synthesis and degradation of trehalose from glucose and alpha-D-glucose 1-phosphate. The equilibrium lies in the direction of trehalose synthesis. This chain is Trehalose phosphorylase, found in Grifola frondosa (Maitake).